The chain runs to 259 residues: 1,2-dihydroxy-1,2-dihydronaphthalene dehydrogenase (259 aa).

NAD(+) is bound by residues 8–35 (AITG…SALV) and Asp58. Ser140 is a substrate binding site. The active-site Proton acceptor is the Tyr153. Lys157 serves as a coordination point for NAD(+).

Belongs to the short-chain dehydrogenases/reductases (SDR) family.

The catalysed reaction is (1R,2S)-1,2-dihydronaphthalene-1,2-diol + NAD(+) = naphthalene-1,2-diol + NADH + H(+). It participates in aromatic compound metabolism; naphthalene degradation. Catalyzes the oxidation of naphthalene dihydrodiol into 1,2-dihydroxynaphthalene. In Ralstonia sp, this protein is 1,2-dihydroxy-1,2-dihydronaphthalene dehydrogenase.